Consider the following 144-residue polypeptide: Ribosomal RNA large subunit methyltransferase H (144 aa).

S-adenosyl-L-methionine contacts are provided by residues Leu-68, Gly-96, and 112-117 (FSKLTF).

It belongs to the RNA methyltransferase RlmH family. In terms of assembly, homodimer.

It is found in the cytoplasm. The enzyme catalyses pseudouridine(1915) in 23S rRNA + S-adenosyl-L-methionine = N(3)-methylpseudouridine(1915) in 23S rRNA + S-adenosyl-L-homocysteine + H(+). Functionally, specifically methylates the pseudouridine at position 1915 (m3Psi1915) in 23S rRNA. The sequence is that of Ribosomal RNA large subunit methyltransferase H from Mycoplasmopsis synoviae (strain 53) (Mycoplasma synoviae).